The primary structure comprises 344 residues: tRNA N6-adenosine threonylcarbamoyltransferase (344 aa).

His-113 and His-117 together coordinate Fe cation. Residues 135–139 (LVSGG), Asp-169, Gly-182, Asp-186, and Asn-278 each bind substrate. Asp-306 lines the Fe cation pocket. The disordered stretch occupies residues 325–344 (ESPISVGTDPSLSVETPQVF). Residues 326-344 (SPISVGTDPSLSVETPQVF) show a composition bias toward polar residues.

It belongs to the KAE1 / TsaD family. The cofactor is Fe(2+).

The protein localises to the cytoplasm. It carries out the reaction L-threonylcarbamoyladenylate + adenosine(37) in tRNA = N(6)-L-threonylcarbamoyladenosine(37) in tRNA + AMP + H(+). Functionally, required for the formation of a threonylcarbamoyl group on adenosine at position 37 (t(6)A37) in tRNAs that read codons beginning with adenine. Is involved in the transfer of the threonylcarbamoyl moiety of threonylcarbamoyl-AMP (TC-AMP) to the N6 group of A37, together with TsaE and TsaB. TsaD likely plays a direct catalytic role in this reaction. The chain is tRNA N6-adenosine threonylcarbamoyltransferase from Corynebacterium glutamicum (strain ATCC 13032 / DSM 20300 / JCM 1318 / BCRC 11384 / CCUG 27702 / LMG 3730 / NBRC 12168 / NCIMB 10025 / NRRL B-2784 / 534).